A 212-amino-acid chain; its full sequence is Adapter protein MecA 2 (212 aa).

It belongs to the MecA family. In terms of assembly, homodimer.

Functionally, enables the recognition and targeting of unfolded and aggregated proteins to the ClpC protease or to other proteins involved in proteolysis. Acts negatively in the development of competence by binding ComK and recruiting it to the ClpCP protease. When overexpressed, inhibits sporulation. Also involved in Spx degradation by ClpC. This is Adapter protein MecA 2 (mecA2) from Halalkalibacterium halodurans (strain ATCC BAA-125 / DSM 18197 / FERM 7344 / JCM 9153 / C-125) (Bacillus halodurans).